We begin with the raw amino-acid sequence, 388 residues long: Mannitol-1-phosphate 5-dehydrogenase (388 aa).

Position 5-16 (5-16 (AIQFGGGNIGRG)) interacts with NAD(+). Lysine 213 is an active-site residue.

Belongs to the mannitol dehydrogenase family. In terms of assembly, monomer.

The catalysed reaction is D-mannitol 1-phosphate + NAD(+) = beta-D-fructose 6-phosphate + NADH + H(+). Catalyzes the NAD(H)-dependent interconversion of D-fructose 6-phosphate and D-mannitol 1-phosphate in the mannitol metabolic pathway. In Aspergillus fumigatus (strain CBS 144.89 / FGSC A1163 / CEA10) (Neosartorya fumigata), this protein is Mannitol-1-phosphate 5-dehydrogenase (mpdA).